The sequence spans 701 residues: Polyribonucleotide nucleotidyltransferase (701 aa).

Asp-487 and Asp-493 together coordinate Mg(2+). The 60-residue stretch at 554–613 folds into the KH domain; that stretch reads PTMIAMKIDTDKIRDVIGKGGATIRAICEETKASIDIEDDGSIKIFGESKEAAEAARQRV. One can recognise an S1 motif domain in the interval 623-691; the sequence is GKIYIGKVER…NRGRIKLSIK (69 aa).

Belongs to the polyribonucleotide nucleotidyltransferase family. As to quaternary structure, component of the RNA degradosome, which is a multiprotein complex involved in RNA processing and mRNA degradation. Mg(2+) serves as cofactor.

Its subcellular location is the cytoplasm. It catalyses the reaction RNA(n+1) + phosphate = RNA(n) + a ribonucleoside 5'-diphosphate. In terms of biological role, involved in mRNA degradation. Catalyzes the phosphorolysis of single-stranded polyribonucleotides processively in the 3'- to 5'-direction. The polypeptide is Polyribonucleotide nucleotidyltransferase (Pseudomonas syringae pv. syringae (strain B728a)).